Here is a 1209-residue protein sequence, read N- to C-terminus: MSARTKEKTKDKTKNDEQTVSTEASAADRNDREKSSSSEPEDNAKETLTKKDSSSKKSVDVLAAMIEQKVQMSGSAGLGEFFGRMRPEITDAFFAALEREADVSKVVPSSLSKLDDGQVVDLLSVGEERTLSQSLFQLEVVTSIPHFYQLTAKQIGALGAQGGYLKAYHGEQVYPFIDPVANQFGRGFDLAYVRINTSGQGVELFIDPFDFDKVSCKVGGESLTGIGLSNAVGVDEITYDDVKTPEQMMEFVVLLIAGAAKMGRFCSSGVDARRRRKLFKTWVRRPVSDNFRHVQGWLLEDDYENYPHVPEALTVFSEYQWFAREVADNMTDNGLGTSVQMEDGPNIESFFNRKYREAAICNLDFITAEAHANVMEELQNEKMNVSAYVDLLQSCQMGIFDIEGDTDTIKLKVYMREVEDYEAELTRMMLFPGDQLYVDCLRTAALVSPNIRQFILSVLIQQATSRVGLIELLPVAEMTASLTSRDNISVSHNMALTLAIGEWKELLRLTNPQQICQKIVCDIMAPFVDGLRMEDSLGVPTPSKLVFSLLGAKVALILTPNLYDYNLHLKAHLVTMILSCFFPDQYGALIASRGYGHDVTGNRIDSIRDGERTKKNCRFATYTVLDPIPNGPPDRTRRKWLLMKRVQEWLLRNDLVRRREIRDIIYRPYANVLRLPGQTYLPRRQAAGAPLPCEVLLNDAIAILEEYRTVFHHPNDRNQGPQDRHALTTLSNLLRWYTRGFAEWFHWVYRPLYLQIALHPIIFWSHRLGQGVWRQFPAVREDRERRFDNHLEGVPFDSPVIAAFEPDVALNPFTLRQGADLLGRVHAQGSTFRGGAYDSASVILLSEYEALYRMTDSEGMVDEYIKTLMASRQLLEGLRLVAELSTGELLRDTPILDYIRTAFCEGRFPSHIFFKILNLFGVKINHGVLAQVGERSIEHRLRGDYRVYYPRPGFLDPALEFIPDRIVVVDPVRPSVRRNVKLIMDAVFDPEFGMIKMRKGVTFSLRPTNDLTFSSFHEIPPIQVEMTGNVNYVYDSETARTRAEYDVQVRWEAPGRIITMNLLVTSSYEILSSMEDILGREVRAFSFVVQDVSKFSGIYYDFMLSAVRKEHAIVWFPNLRGILHHHAISIEKVETCFKAAELAQFSSFLSLRPTALIKLNVVQTTNIRGGILPPSVSKPILPCEGVHPSFIFALMSMWRRIGFAGLPSR.

Composition is skewed to basic and acidic residues over residues M1–E17 and A26–S53. Residues M1–S53 are disordered.

This sequence belongs to the turreted BTV-fold inner capsid family. As to quaternary structure, homodecamer; each decamer is made up of two conformers of VP2, called VP2A and VP2B. 12 homodecamers assemble to form an icosahedral capsid.

It localises to the virion. Its function is as follows. Inner capsid protein that self-assembles to form an icosahedral capsid with a T=2 symmetry, which consists of 120 copies of VP2, with channels at each of its five-fold vertices. This capsid constitutes the innermost concentric layer of the viral mature particle. The protein is Inner capsid protein VP2 of Callospermophilus lateralis (Golden-mantled ground squirrel).